The chain runs to 1860 residues: MGWGSRCCCPGRLDLLCVLALLGGCLLPVCRTRVYTNHWAVKIAGGFPEANRIASKYGFINIGQIGALKDYYHFYHSRTIKRSVISSRGTHSFISMEPKVEWIQQQVVKKRTKRDYDFSRAQSTYFNDPKWPSMWYMHCSDNTHPCQSDMNIEGAWKRGYTGKNIVVTILDDGIERTHPDLMQNYDALASCDVNGNDLDPMPRYDASNENKHGTRCAGEVAAAANNSHCTVGIAFNAKIGGVRMLDGDVTDMVEAKSVSFNPQHVHIYSASWGPDDDGKTVDGPAPLTRQAFENGVRMGRRGLGSVFVWASGNGGRSKDHCSCDGYTNSIYTISISSTAESGKKPWYLEECSSTLATTYSSGESYDKKIITTDLRQRCTDNHTGTSASAPMAAGIIALALEANPFLTWRDVQHVIVRTSRAGHLNANDWKTNAAGFKVSHLYGFGLMDAEAMVMEAEKWTTVPRQHVCVESTDRQIKTIRPNSAVRSIYKASGCSDNPNRHVNYLEHVVVRITITHPRRGDLAIYLTSPSGTRSQLLANRLFDHSMEGFKNWEFMTIHCWGERAAGDWVLEVYDTPSQLRNFKTPGKLKEWSLVLYGTSVQPYSPTNEFPKVERFRYSRVEDPTDDYGTEDYAGPCDPECSEVGCDGPGPDHCNDCLHYYYKLKNNTRICVSSCPPGHYHADKKRCRKCAPNCESCFGSHGDQCMSCKYGYFLNEETNSCVTHCPDGSYQDTKKNLCRKCSENCKTCTEFHNCTECRDGLSLQGSRCSVSCEDGRYFNGQDCQPCHRFCATCAGAGADGCINCTEGYFMEDGRCVQSCSISYYFDHSSENGYKSCKKCDISCLTCNGPGFKNCTSCPSGYLLDLGMCQMGAICKDGEYVDEHGHCQTCEASCAKCQGPTQEDCTTCPMTRIFDDGRCVSNCPSWKFEFENQCHPCHHTCQRCQGSGPTHCTSCGADNYGREHFLYQGECGDSCPEGHYATEGNTCLPCPDNCELCHSVHVCTRCMKGYFIAPTNHTCQKLECGQGEVQDPDYEECVPCEEGCLGCSLDDPGTCTSCAMGYYRFDHHCYKTCPEKTYSEEVECKACDSNCGSCDQNGCYWCEEGFFLLGGSCVRKCGPGFYGDQEMGECESCHRACETCTGPGHDECSSCQEGLQLLRGMCVHATKTQEEGKFWNDILRKLQPCHSSCKTCNGSATLCTSCPKGAYLLAQACVSSCPQGTWPSVRSGSCENCTEACAICSGADLCKKCQMQPGHPLFLHEGRCYSKCPEGSYAEDGICERCSSPCRTCEGNATNCHSCEGGHVLHHGVCQENCPERHVAVKGVCKHCPEMCQDCIHEKTCKECTPEFFLHDDMCHQSCPRGFYADSRHCVPCHKDCLECSGPKADDCELCLESSWVLYDGLCLEECPAGTYYEKETKECRDCHKSCLTCSSSGTCTTCQKGLIMNPRGSCMANEKCSPSEYWDEDAPGCKPCHVKCFHCMGPAEDQCQTCPMNSLLLNTTCVKDCPEGYYADEDSNRCAHCHSSCRTCEGRHSRQCHSCRPGWFQLGKECLLQCREGYYADNSTGRCERCNRSCKGCQGPRPTDCLSCDRFFFLLRSKGECHRSCPDHYYVEQSTQTCERCHPTCDQCKGKGALNCLSCVWSYHLMGGICTSDCLVGEYRVGEGEKFNCEKCHESCMECKGPGAKNCTLCPANLVLHMDDSHCLHCCNTSDPPSAQECCDCQDTTDECILRTSKVRPATEHFKTALFITSSMMLVLLLGAAVVVWKKSRGRVQPAAKAGYEKLADPNKSYSSYKSSYRESTSFEEDQVIEYRDRDYDEDDDDDIVYMGQDGTVYRKFKYGLLDDDDIDELEYDDESYSYYQ.

An N-terminal signal peptide occupies residues 1-32; sequence MGWGSRCCCPGRLDLLCVLALLGGCLLPVCRT. The propeptide occupies 33 to 114; sequence RVYTNHWAVK…QQVVKKRTKR (82 aa). Over 115-1743 the chain is Extracellular; that stretch reads DYDFSRAQST…VRPATEHFKT (1629 aa). The Peptidase S8 domain occupies 134–453; the sequence is MWYMHCSDNT…FGLMDAEAMV (320 aa). Catalysis depends on charge relay system residues Asp171 and His212. Residues Asn225 and Asn381 are each glycosylated (N-linked (GlcNAc...) asparagine). Catalysis depends on Ser386, which acts as the Charge relay system. One can recognise a P/Homo B domain in the interval 461-601; sequence TVPRQHVCVE…SLVLYGTSVQ (141 aa). Positions 519–521 match the Cell attachment site motif; it reads RGD. FU repeat units follow at residues 630–680, 683–730, 734–777, 779–824, 832–879, 882–927, 929–979, 982–1028, 1032–1077, 1079–1121, 1125–1168, 1177–1221, 1225–1272, 1274–1318, 1320–1363, 1365–1411, 1415–1461, 1465–1510, 1514–1559, 1563–1610, 1614–1659, and 1665–1712; these read EDYA…GHYH, KKRC…GSYQ, KNLC…GRYF, GQDC…SYYF, YKSC…GEYV, HGHC…WKFE, ENQC…GHYA, GNTC…GEVQ, YEEC…KTYS, EVEC…GFYG, MGEC…KTQE, LRKL…GTWP, SGSC…GSYA, DGIC…RHVA, KGVC…GFYA, SRHC…GTYY, TKEC…SEYW, APGC…GYYA, SNRC…GYYA, TGRC…HYYV, TQTC…GEYR, and KFNC…SDPP. The tract at residues 636-1727 is CRM (Cys-rich motif); sequence CDPECSEVGC…CDCQDTTDEC (1092 aa). The N-linked (GlcNAc...) asparagine glycan is linked to Asn665. N-linked (GlcNAc...) asparagine glycosylation is found at Asn752, Asn802, and Asn852. In terms of domain architecture, PLAC spans 869 to 913; the sequence is MGAICKDGEYVDEHGHCQTCEASCAKCQGPTQEDCTTCPMTRIFD. N-linked (GlcNAc...) asparagine glycosylation occurs at Asn1014. Asn1191 carries an N-linked (GlcNAc...) asparagine glycan. A glycan (N-linked (GlcNAc...) asparagine) is linked at Asn1290. Asn1497 carries an N-linked (GlcNAc...) asparagine glycan. N-linked (GlcNAc...) asparagine glycans are attached at residues Asn1685 and Asn1707. A helical transmembrane segment spans residues 1744 to 1764; the sequence is ALFITSSMMLVLLLGAAVVVW. Residues 1765–1860 are Cytoplasmic-facing; that stretch reads KKSRGRVQPA…YDDESYSYYQ (96 aa). AC regions lie at residues 1807–1826 and 1838–1860; these read VIEY…IVYM and YGLL…SYYQ.

It belongs to the peptidase S8 family. In terms of tissue distribution, expressed in T-lymphocytes.

The protein localises to the secreted. The protein resides in the endomembrane system. Serine endoprotease that processes various proproteins by cleavage at paired basic amino acids, recognizing the RXXX[KR]R consensus motif. Likely functions in the constitutive and regulated secretory pathways. Plays an essential role in pregnancy establishment by proteolytic activation of a number of important factors such as BMP2, CALD1 and alpha-integrins. The polypeptide is Proprotein convertase subtilisin/kexin type 5 (PCSK5) (Homo sapiens (Human)).